A 1396-amino-acid chain; its full sequence is Helicase ARIP4 (1396 aa).

The tract at residues 1-103 (MSDASISGSE…LQKPANLRRN (103 aa)) is disordered. Over residues 11-49 (PELDPEDMEEEEEDDEDDDEEEEEEEDEEDNDGDDEDDK) the composition is skewed to acidic residues. Residues 75-84 (RSTTSGQSGQ) show a composition bias toward polar residues. Residues 290–510 (RFSGSSGFGC…WCMVDFVRPD (221 aa)) form the Helicase ATP-binding domain. An ATP-binding site is contributed by 303 to 310 (HSMGLGKT). Positions 461–464 (DEGH) match the DEAH box motif. The short motif at 549–553 (LHSLL) is the LXXLL motif 1 element. Positions 717-891 (KMVLLFHLIE…RVVDDLNPEV (175 aa)) constitute a Helicase C-terminal domain. Disordered stretches follow at residues 1117-1168 (SGKQ…PDSP) and 1194-1250 (NLGL…STMN). Composition is skewed to polar residues over residues 1128 to 1148 (QATS…RHST) and 1218 to 1238 (DQSS…SYPN). Positions 1273–1277 (LPSLL) match the LXXLL motif 2 motif. Residues 1340-1396 (GLPTNNPASTFPGYLSSHSNYQASPGTSSRPLPSGETELGSCEEDGRDDDVVEVTGE) form a disordered region. Positions 1355–1370 (SSHSNYQASPGTSSRP) are enriched in polar residues. Positions 1380–1396 (SCEEDGRDDDVVEVTGE) are enriched in acidic residues.

Belongs to the SNF2/RAD54 helicase family.

The protein resides in the nucleus. It carries out the reaction ATP + H2O = ADP + phosphate + H(+). In terms of biological role, DNA helicase that modulates androgen receptor (AR)-dependent transactivation in a promoter-dependent manner. In Xenopus tropicalis (Western clawed frog), this protein is Helicase ARIP4 (rad54l2).